The following is a 224-amino-acid chain: ATP-dependent dethiobiotin synthetase BioD (224 aa).

13 to 18 (NVGKTI) provides a ligand contact to ATP. Position 17 (Thr-17) interacts with Mg(2+). Lys-38 is a catalytic residue. Ser-42 contacts substrate. Residues Asp-55, 116–119 (EGAG), 176–177 (NN), and Asn-211 contribute to the ATP site. The Mg(2+) site is built by Asp-55 and Glu-116.

This sequence belongs to the dethiobiotin synthetase family. Homodimer. The cofactor is Mg(2+).

The protein localises to the cytoplasm. The catalysed reaction is (7R,8S)-7,8-diammoniononanoate + CO2 + ATP = (4R,5S)-dethiobiotin + ADP + phosphate + 3 H(+). It functions in the pathway cofactor biosynthesis; biotin biosynthesis; biotin from 7,8-diaminononanoate: step 1/2. Its function is as follows. Catalyzes a mechanistically unusual reaction, the ATP-dependent insertion of CO2 between the N7 and N8 nitrogen atoms of 7,8-diaminopelargonic acid (DAPA, also called 7,8-diammoniononanoate) to form a ureido ring. The chain is ATP-dependent dethiobiotin synthetase BioD from Buchnera aphidicola subsp. Acyrthosiphon pisum (strain 5A).